Here is a 107-residue protein sequence, read N- to C-terminus: Small ribosomal subunit protein bS6 (107 aa).

It belongs to the bacterial ribosomal protein bS6 family.

In terms of biological role, binds together with bS18 to 16S ribosomal RNA. The protein is Small ribosomal subunit protein bS6 of Synechococcus elongatus (strain ATCC 33912 / PCC 7942 / FACHB-805) (Anacystis nidulans R2).